The following is an 874-amino-acid chain: Leucine--tRNA ligase (874 aa).

Positions 43–53 match the 'HIGH' region motif; it reads PYPSGRIHIGH. A 'KMSKS' region motif is present at residues 630–634; sequence KMSKS. Position 633 (K633) interacts with ATP.

This sequence belongs to the class-I aminoacyl-tRNA synthetase family.

The protein localises to the cytoplasm. It carries out the reaction tRNA(Leu) + L-leucine + ATP = L-leucyl-tRNA(Leu) + AMP + diphosphate. The sequence is that of Leucine--tRNA ligase from Bradyrhizobium diazoefficiens (strain JCM 10833 / BCRC 13528 / IAM 13628 / NBRC 14792 / USDA 110).